The primary structure comprises 418 residues: Maltoporin (418 aa).

The first 26 residues, 1–26 (MLPMNRNTLGLAVTIATVFVSSTVTA), serve as a signal peptide directing secretion.

It belongs to the porin LamB (TC 1.B.3) family. In terms of assembly, homotrimer formed of three 18-stranded antiparallel beta-barrels, containing three independent channels.

It localises to the cell outer membrane. It catalyses the reaction beta-maltose(in) = beta-maltose(out). Its function is as follows. Involved in the transport of maltose and maltodextrins. The polypeptide is Maltoporin (Photobacterium profundum (strain SS9)).